A 486-amino-acid polypeptide reads, in one-letter code: Glycogen synthase (486 aa).

K15 lines the ADP-alpha-D-glucose pocket.

The protein belongs to the glycosyltransferase 1 family. Bacterial/plant glycogen synthase subfamily.

It catalyses the reaction [(1-&gt;4)-alpha-D-glucosyl](n) + ADP-alpha-D-glucose = [(1-&gt;4)-alpha-D-glucosyl](n+1) + ADP + H(+). Its pathway is glycan biosynthesis; glycogen biosynthesis. Its function is as follows. Synthesizes alpha-1,4-glucan chains using ADP-glucose. This chain is Glycogen synthase, found in Thermotoga maritima (strain ATCC 43589 / DSM 3109 / JCM 10099 / NBRC 100826 / MSB8).